The following is an 847-amino-acid chain: Alanine--tRNA ligase (847 aa).

Residues His554, His558, Cys656, and His660 each coordinate Zn(2+).

It belongs to the class-II aminoacyl-tRNA synthetase family. Requires Zn(2+) as cofactor.

Its subcellular location is the cytoplasm. It catalyses the reaction tRNA(Ala) + L-alanine + ATP = L-alanyl-tRNA(Ala) + AMP + diphosphate. Functionally, catalyzes the attachment of alanine to tRNA(Ala) in a two-step reaction: alanine is first activated by ATP to form Ala-AMP and then transferred to the acceptor end of tRNA(Ala). Also edits incorrectly charged Ser-tRNA(Ala) and Gly-tRNA(Ala) via its editing domain. The protein is Alanine--tRNA ligase of Helicobacter pylori (strain HPAG1).